Reading from the N-terminus, the 190-residue chain is Probable nicotinate-nucleotide adenylyltransferase (190 aa).

This sequence belongs to the NadD family.

It catalyses the reaction nicotinate beta-D-ribonucleotide + ATP + H(+) = deamido-NAD(+) + diphosphate. The protein operates within cofactor biosynthesis; NAD(+) biosynthesis; deamido-NAD(+) from nicotinate D-ribonucleotide: step 1/1. Functionally, catalyzes the reversible adenylation of nicotinate mononucleotide (NaMN) to nicotinic acid adenine dinucleotide (NaAD). The polypeptide is Probable nicotinate-nucleotide adenylyltransferase (Borrelia hermsii (strain HS1 / DAH)).